Here is a 901-residue protein sequence, read N- to C-terminus: Clathrin coat assembly protein AP180 (901 aa).

The region spanning 14 to 145 (QYSVTGSAVA…FSYRQMAFDF (132 aa)) is the ENTH domain. Disordered stretches follow at residues 285 to 326 (LEGK…DTSP), 397 to 424 (PISD…STTT), 497 to 522 (PETS…PSPA), and 573 to 606 (AAAP…PESS). A phosphoserine mark is found at S296, S300, and S306. Polar residues predominate over residues 302–324 (LSKSSPATTVTSPNSTPAKTIDT). T310 carries an O-linked (GlcNAc) threonine glycan. S313 carries the post-translational modification Phosphoserine. T317 carries the post-translational modification Phosphothreonine. Low complexity-rich tracts occupy residues 410-424 (TTTT…STTT) and 500-511 (SAPVVTPTASTA). Positions 512 to 522 (PPVPATAPSPA) are enriched in pro residues. S594, S600, S621, S627, and S761 each carry phosphoserine. 2 disordered regions span residues 803-845 (SAGV…GMTM) and 857-901 (MMRP…KDFL). Low complexity predominate over residues 835-845 (GMPPSGTGMTM). R859 is subject to Asymmetric dimethylarginine; alternate. R859 bears the Omega-N-methylarginine; alternate mark. The segment covering 870–882 (TQLSPSPTPATQS) has biased composition (polar residues). The segment covering 887–901 (PAKDPLADLNIKDFL) has biased composition (basic and acidic residues).

Belongs to the PICALM/SNAP91 family. In terms of assembly, binds AP2A2. Interacts with AP2B1; clathrin competes with SNAP91. Thr-310 can be modified by the addition of N-acetylglucosamine which can be further phosphorylated. There is no evidence for direct Thr-310 phosphorylation. Brain. Associated with the synapses.

It is found in the cell membrane. The protein resides in the membrane. Its subcellular location is the coated pit. Adaptins are components of the adaptor complexes which link clathrin to receptors in coated vesicles. Clathrin-associated protein complexes are believed to interact with the cytoplasmic tails of membrane proteins, leading to their selection and concentration. Binding of AP180 to clathrin triskelia induces their assembly into 60-70 nm coats. This is Clathrin coat assembly protein AP180 (Snap91) from Mus musculus (Mouse).